Here is a 164-residue protein sequence, read N- to C-terminus: Ribosome-binding factor A (164 aa).

This sequence belongs to the RbfA family. In terms of assembly, monomer. Binds 30S ribosomal subunits, but not 50S ribosomal subunits or 70S ribosomes.

It is found in the cytoplasm. Functionally, one of several proteins that assist in the late maturation steps of the functional core of the 30S ribosomal subunit. Associates with free 30S ribosomal subunits (but not with 30S subunits that are part of 70S ribosomes or polysomes). Required for efficient processing of 16S rRNA. May interact with the 5'-terminal helix region of 16S rRNA. This is Ribosome-binding factor A from Caulobacter sp. (strain K31).